A 226-amino-acid chain; its full sequence is 3-dehydroquinate dehydratase (226 aa).

3-dehydroquinate-binding positions include 33-35 and Arg65; that span reads ELR. The Proton donor/acceptor role is filled by His120. Residue Lys147 is the Schiff-base intermediate with substrate of the active site. 3-dehydroquinate-binding residues include Arg186, Ser205, and Gln209.

It belongs to the type-I 3-dehydroquinase family. Homodimer.

It catalyses the reaction 3-dehydroquinate = 3-dehydroshikimate + H2O. It participates in metabolic intermediate biosynthesis; chorismate biosynthesis; chorismate from D-erythrose 4-phosphate and phosphoenolpyruvate: step 3/7. Functionally, involved in the third step of the chorismate pathway, which leads to the biosynthesis of aromatic amino acids. Catalyzes the cis-dehydration of 3-dehydroquinate (DHQ) and introduces the first double bond of the aromatic ring to yield 3-dehydroshikimate. The sequence is that of 3-dehydroquinate dehydratase from Thermodesulfovibrio yellowstonii (strain ATCC 51303 / DSM 11347 / YP87).